The following is a 275-amino-acid chain: Sulfur carrier protein FdhD (275 aa).

The active-site Cysteine persulfide intermediate is the C121. Position 258-263 (258-263 (FSKPGR)) interacts with Mo-bis(molybdopterin guanine dinucleotide).

Belongs to the FdhD family.

The protein resides in the cytoplasm. Its function is as follows. Required for formate dehydrogenase (FDH) activity. Acts as a sulfur carrier protein that transfers sulfur from IscS to the molybdenum cofactor prior to its insertion into FDH. The chain is Sulfur carrier protein FdhD from Yersinia enterocolitica serotype O:8 / biotype 1B (strain NCTC 13174 / 8081).